The primary structure comprises 836 residues: Serine/threonine-protein kinase 1 (836 aa).

Positions 1 to 12 (MDHNSPKSRRSR) are enriched in basic residues. The tract at residues 1-244 (MDHNSPKSRR…SLPDSITRED (244 aa)) is disordered. A compositionally biased stretch (basic and acidic residues) spans 28-40 (SDSDSDQGRDRDK). 3 stretches are compositionally biased toward acidic residues: residues 64 to 75 (DGEGEEDDDDDS), 95 to 105 (DYDDDDGDESG), and 145 to 163 (EESS…DDGD). Over residues 224 to 238 (MQQQNSKMSTTSLPD) the composition is skewed to polar residues. Positions 249-503 (YEFLNELGKG…AAEMLKHKFV (255 aa)) constitute a Protein kinase domain. ATP is bound by residues 255 to 263 (LGKGSYGSV) and lysine 278. Aspartate 371 functions as the Proton acceptor in the catalytic mechanism. 3 disordered regions span residues 539–571 (LEDT…APLT), 600–640 (EDET…DSWI), and 760–780 (TSSD…PLPP). The segment covering 562 to 571 (PQNSTEAPLT) has biased composition (polar residues). Over residues 606-618 (SDSRSQLVREKES) the composition is skewed to basic and acidic residues.

Belongs to the protein kinase superfamily. STE Ser/Thr protein kinase family. STE20 subfamily. As to quaternary structure, interacts with MOB1A and MOB1B via its N-terminal region at the plasma membrane and in the nucleus. Binds to BIK1 to phosphorylate and stabilize it. Interacts with and phosphorylates RBOHD upon flagellin perception to activate it. It depends on Mn(2+) as a cofactor. Autophosphorylates. As to expression, mostly expressed in mature tissues of roots, shoots, hypocotyls, cotyledons, stems, leaves and flowers, as well as in the shoot apical meristem (SAM).

The protein localises to the cell membrane. The protein resides in the nucleus. It is found in the golgi apparatus. It localises to the trans-Golgi network. Its subcellular location is the early endosome. The catalysed reaction is L-seryl-[protein] + ATP = O-phospho-L-seryl-[protein] + ADP + H(+). It catalyses the reaction L-threonyl-[protein] + ATP = O-phospho-L-threonyl-[protein] + ADP + H(+). Its function is as follows. Serine/threonine-protein kinase. Regulates organ size in coordination with MOB1A by modulating cell proliferation and cell expansion, possibly by facilitating cell cycle exit. Positive regulator of the pathogen-associated molecular pattern (PAMP, e.g. flg22)-triggered immunity (PTI) signaling by stabilizing BIK1 and activating RBOHD by phosphorylation to promote the extracellular reactive oxygen species (ROS) burst involved in defense responses to bacterial infection. This Arabidopsis thaliana (Mouse-ear cress) protein is Serine/threonine-protein kinase 1.